The chain runs to 435 residues: Astacin-like metalloendopeptidase (435 aa).

The N-terminal stretch at 1–23 (MGIMGSLWPWILTMLSLLGLSMG) is a signal peptide. The region spanning 85 to 282 (RLLSVTNNKW…TRVCRLYNCS (198 aa)) is the Peptidase M12A domain. Disulfide bonds link Cys132–Cys281 and Cys153–Cys172. Residue His182 coordinates Zn(2+). Residue Glu183 is part of the active site. His186 and His192 together coordinate Zn(2+). Residues 318 to 329 (SEESGSSAPSGS) are compositionally biased toward low complexity. Residues 318–356 (SEESGSSAPSGSRTGGQSIAGLGNSQQGWEHPPQSTFSV) are disordered. Residues 340–355 (GNSQQGWEHPPQSTFS) show a composition bias toward polar residues.

As to quaternary structure, interacts (via N-terminal domain) with SPACA3; the interaction occurs during fertilization. It depends on Zn(2+) as a cofactor. As to expression, ovary-specific. Expressed in secondary, antral and Graafian follicle oocytes. Expressed in the egg cells. Not detected in two-cell embryos. Not detected in naked oocytes, oocytes in primordial or unilaminar primary follicles, or in any other ovarian cells at pre-pubertal, pubertal or adult stages (at protein level). Ovary-specific.

The protein resides in the cytoplasm. It localises to the cell membrane. The protein localises to the cytoplasmic vesicle. Its subcellular location is the secretory vesicle. It is found in the cortical granule. With respect to regulation, inhibited by wide spectrum metalloproteinase inhibitor batimastat (BB-94). Also inhibited by EDTA. Functionally, oocyte-specific oolemmal receptor involved in sperm and egg adhesion and fertilization. Plays a role in the polyspermy inhibition. Probably acts as a protease for the post-fertilization cleavage of ZP2. Cleaves the sperm-binding ZP2 at the surface of the zona pellucida after fertilization and cortical granule exocytosis, rendering the zona pellucida unable to support further sperm binding. The protein is Astacin-like metalloendopeptidase of Mus musculus (Mouse).